Here is a 157-residue protein sequence, read N- to C-terminus: Protein Smg (157 aa).

This sequence belongs to the Smg family.

The sequence is that of Protein Smg from Escherichia coli O7:K1 (strain IAI39 / ExPEC).